We begin with the raw amino-acid sequence, 379 residues long: Cytochrome b (379 aa).

4 helical membrane-spanning segments follow: residues 33-53 (FGSL…FLAM), 77-98 (WLIR…FIHV), 113-133 (WNIG…GYVL), and 178-198 (FFAF…VHLL). Residues His-83 and His-97 each coordinate heme b. Heme b contacts are provided by His-182 and His-196. His-201 is a binding site for a ubiquinone. The next 4 helical transmembrane spans lie at 226 to 246 (TKDL…ALFF), 288 to 308 (LGGV…PLLN), 320 to 340 (ITQV…WIGG), and 347 to 367 (XTMI…ILIP).

It belongs to the cytochrome b family. As to quaternary structure, the cytochrome bc1 complex contains 11 subunits: 3 respiratory subunits (MT-CYB, CYC1 and UQCRFS1), 2 core proteins (UQCRC1 and UQCRC2) and 6 low-molecular weight proteins (UQCRH/QCR6, UQCRB/QCR7, UQCRQ/QCR8, UQCR10/QCR9, UQCR11/QCR10 and a cleavage product of UQCRFS1). This cytochrome bc1 complex then forms a dimer. It depends on heme b as a cofactor.

It is found in the mitochondrion inner membrane. In terms of biological role, component of the ubiquinol-cytochrome c reductase complex (complex III or cytochrome b-c1 complex) that is part of the mitochondrial respiratory chain. The b-c1 complex mediates electron transfer from ubiquinol to cytochrome c. Contributes to the generation of a proton gradient across the mitochondrial membrane that is then used for ATP synthesis. The chain is Cytochrome b (MT-CYB) from Akodon boliviensis (Bolivian grass mouse).